Reading from the N-terminus, the 154-residue chain is Low molecular weight protein-tyrosine-phosphatase PtpA (154 aa).

The active-site Nucleophile is the Cys8. Arg14 is a catalytic residue. Residue Asp120 is the Proton donor of the active site.

Belongs to the low molecular weight phosphotyrosine protein phosphatase family.

The enzyme catalyses O-phospho-L-tyrosyl-[protein] + H2O = L-tyrosyl-[protein] + phosphate. Functionally, dephosphorylates the phosphotyrosine-containing proteins. The chain is Low molecular weight protein-tyrosine-phosphatase PtpA (ptpA) from Staphylococcus saprophyticus subsp. saprophyticus (strain ATCC 15305 / DSM 20229 / NCIMB 8711 / NCTC 7292 / S-41).